The primary structure comprises 55 residues: Large ribosomal subunit protein bL33 (55 aa).

The protein belongs to the bacterial ribosomal protein bL33 family.

The polypeptide is Large ribosomal subunit protein bL33 (Gluconacetobacter diazotrophicus (strain ATCC 49037 / DSM 5601 / CCUG 37298 / CIP 103539 / LMG 7603 / PAl5)).